The sequence spans 308 residues: Elongation factor Ts (308 aa).

The interval 80 to 83 (TDFV) is involved in Mg(2+) ion dislocation from EF-Tu.

This sequence belongs to the EF-Ts family.

The protein resides in the cytoplasm. Its function is as follows. Associates with the EF-Tu.GDP complex and induces the exchange of GDP to GTP. It remains bound to the aminoacyl-tRNA.EF-Tu.GTP complex up to the GTP hydrolysis stage on the ribosome. This Rhodopseudomonas palustris (strain BisB5) protein is Elongation factor Ts.